The sequence spans 307 residues: Small ribosomal subunit biogenesis GTPase RsgA (307 aa).

The 158-residue stretch at 80–237 (KADLRQTIVS…IVDTPGIKEF (158 aa)) folds into the CP-type G domain. GTP contacts are provided by residues 129–132 (NKID) and 180–188 (GQSGVGKSS). Cysteine 261, cysteine 266, histidine 268, and cysteine 274 together coordinate Zn(2+).

Belongs to the TRAFAC class YlqF/YawG GTPase family. RsgA subfamily. Monomer. Associates with 30S ribosomal subunit, binds 16S rRNA. Requires Zn(2+) as cofactor.

The protein localises to the cytoplasm. Functionally, one of several proteins that assist in the late maturation steps of the functional core of the 30S ribosomal subunit. Helps release RbfA from mature subunits. May play a role in the assembly of ribosomal proteins into the subunit. Circularly permuted GTPase that catalyzes slow GTP hydrolysis, GTPase activity is stimulated by the 30S ribosomal subunit. This Borreliella burgdorferi (strain ATCC 35210 / DSM 4680 / CIP 102532 / B31) (Borrelia burgdorferi) protein is Small ribosomal subunit biogenesis GTPase RsgA.